The primary structure comprises 176 residues: Large ribosomal subunit protein eL20 (176 aa).

It belongs to the eukaryotic ribosomal protein eL20 family. In terms of assembly, component of the large ribosomal subunit.

It is found in the cytoplasm. Functionally, component of the large ribosomal subunit. The ribosome is a large ribonucleoprotein complex responsible for the synthesis of proteins in the cell. This is Large ribosomal subunit protein eL20 (rpl18a) from Ictalurus punctatus (Channel catfish).